The following is a 274-amino-acid chain: Diaminopimelate epimerase (274 aa).

Residues N11 and N65 each contribute to the substrate site. The Proton donor role is filled by C74. Residues 75 to 76 (GN), N158, N191, and 209 to 210 (ER) each bind substrate. The Proton acceptor role is filled by C218. 219–220 (GT) is a substrate binding site.

Belongs to the diaminopimelate epimerase family. Homodimer.

Its subcellular location is the cytoplasm. It carries out the reaction (2S,6S)-2,6-diaminopimelate = meso-2,6-diaminopimelate. It participates in amino-acid biosynthesis; L-lysine biosynthesis via DAP pathway; DL-2,6-diaminopimelate from LL-2,6-diaminopimelate: step 1/1. Its function is as follows. Catalyzes the stereoinversion of LL-2,6-diaminopimelate (L,L-DAP) to meso-diaminopimelate (meso-DAP), a precursor of L-lysine and an essential component of the bacterial peptidoglycan. The sequence is that of Diaminopimelate epimerase from Carboxydothermus hydrogenoformans (strain ATCC BAA-161 / DSM 6008 / Z-2901).